Here is a 417-residue protein sequence, read N- to C-terminus: NADH-quinone oxidoreductase subunit D (417 aa).

The protein belongs to the complex I 49 kDa subunit family. In terms of assembly, NDH-1 is composed of 14 different subunits. Subunits NuoB, C, D, E, F, and G constitute the peripheral sector of the complex.

The protein resides in the cell inner membrane. It carries out the reaction a quinone + NADH + 5 H(+)(in) = a quinol + NAD(+) + 4 H(+)(out). Functionally, NDH-1 shuttles electrons from NADH, via FMN and iron-sulfur (Fe-S) centers, to quinones in the respiratory chain. The immediate electron acceptor for the enzyme in this species is believed to be ubiquinone. Couples the redox reaction to proton translocation (for every two electrons transferred, four hydrogen ions are translocated across the cytoplasmic membrane), and thus conserves the redox energy in a proton gradient. The sequence is that of NADH-quinone oxidoreductase subunit D from Polaromonas naphthalenivorans (strain CJ2).